Consider the following 130-residue polypeptide: MSMQDTLADMFTRIRNAQMAKKVQVEIPASKAKEAVAKVLKDEGYIAGYEVTGDKKPVMTVELKYYEGSPVIEKIARVSRPGLRVYKSAGEIPKVKDGLGVMIVSTNQGIISDRAARKANIGGELICEVS.

The protein belongs to the universal ribosomal protein uS8 family. Part of the 30S ribosomal subunit. Contacts proteins S5 and S12.

Functionally, one of the primary rRNA binding proteins, it binds directly to 16S rRNA central domain where it helps coordinate assembly of the platform of the 30S subunit. The polypeptide is Small ribosomal subunit protein uS8 (Alcanivorax borkumensis (strain ATCC 700651 / DSM 11573 / NCIMB 13689 / SK2)).